Here is a 1465-residue protein sequence, read N- to C-terminus: MAPMHEEDCKLEASAVSDSGSFAASRARREKKSKKGRQEALERLKKAKAGEKYKYEVEDLTSVYEEVDEEQYSKLVQARQDDDWIVDDDGIGYVEDGREIFDDDLEDDALDTCGKGSDGKAHRKDRKDVKKPSVTKPNNIKAMFIASAGKKTTDKAVDLSKDDLLGDILQDLNTETAQITPPPVLIPKKKRSTGALLNPFSVHTPKAIPSGKPASPVLRNEPLLTPIPLKRAELAGELAQPECPEDEQELGVMEFEDGDFDESMDTEKVDEKPVTAKTWDQETEPVERVEHEADPERGTTSYLENFLPDVSCWDIDQDDESIPQEVQVDSSNLPLVKGADDEQVFQFYWLDAYEDPYNQPGVVFLFGKVWIESVKTHVSCCVMVKNIERTLYFLPREMKFDLNTGKETAIPVTMKDVYEEFDSKISAKYKIMKFKSKIVEKNYAFEIPDVPEKSEYLEVRYSAEVPQLPQNLKGETFSHVFGTNTSSLELFLMNRKIKGPCWLEVKNPQLLNQPISWCKFEVMALKPDLVNVIKDVSPPPLVVMSFSMKTMQNVQNHQHEIIAMAALVHHSFALDKAPPEPPFQTHFCVVSKPKDCIFPCDFKEVISKKNMKVEIAATERTLIGFFLAKVHKIDPDILVGHNICSFELEVLLQRINECKVPYWSKIGRLRRSNMPKLGSRSGFGERNATCGRMICDVEISAKELIHCKSYHLSELVQQILKTERIVIPTENIRNMYSESSYLLYLLEHIWKDARFILQIMCELNVLPLALQITNIAGNIMSRTLMGGRSERNEFLLLHAFYENNYIVPDKQIFRKPQQKLGDEDEEIDGDTNKYKKGRKKATYAGGLVLDPKVGFYDKFILLLDFNSLYPSIIQEFNICFTTVQRVTSEVQKATEDEEQEQIPELPDPNLEMGILPREIRKLVERRKQVKQLMKQQDLNPDLVLQYDIRQKALKLTANSMYGCLGFSYSRFYAKPLAALVTYKGREILMHTKDMVQKMNLEVIYGDTDSIMINTNSTNLEEVFKLGNKVKSEVNKLYKLLEIDIDAVFKSLLLLKKKKYAALVVEPTSDGNYITKQELKGLDIVRRDWCDLAKDTGNFVIGQILSDQSRDTIVENIQKRLIEIGENVLNGSVPVSQFEINKALTKDPQDYPDRKSLPHVHVALWINSQGGRKVKAGDTVSYVICQDGSNLTATQRAYAPEQLQKLDNLAIDTQYYLAQQIHPVVARICEPIDGIDAVLIALWLGLDSTQFRVHQYHKDEENDALLGGPAQLTDEEKYKDCEKFKCLCPSCGTENIYDNVFEGSGLDMEPSLYRCSNVDCKVSPLTFMVQLSNKLIMDIRRCIKKYYDGWLICEEPTCCSRLRRLPLHFSRNGPLCPVCMKAVLRPEYSDKSLYTQLCFYRYIFDADCALEKLTEHEKDKLKKQFFPLRVLQDYRKVKNIAEQFLSWSGYSEVNLSKLFANYAGKS.

Disordered stretches follow at residues 20 to 39 (GSFAASRARREKKSKKGRQE) and 105 to 135 (LEDDALDTCGKGSDGKAHRKDRKDVKKPSVT). Over residues 26–35 (RARREKKSKK) the composition is skewed to basic residues. Phosphothreonine is present on Thr180. Phosphoserine is present on residues Ser192 and Ser215. An N6-acetyllysine modification is found at Lys230. Residues 261–297 (DESMDTEKVDEKPVTAKTWDQETEPVERVEHEADPER) form a disordered region. Composition is skewed to basic and acidic residues over residues 265–274 (DTEKVDEKPV) and 285–297 (PVERVEHEADPER). A DNA-binding region spans residues 654 to 719 (RINECKVPYW…YHLSELVQQI (66 aa)). The residue at position 974 (Lys974) is an N6-succinyllysine. Residues 1249–1380 (QFRVHQYHKD…NGPLCPVCMK (132 aa)) form a DNA-binding region. Residues Cys1287, Cys1290, Cys1314, Cys1319, Cys1352, Cys1357, Cys1375, and Cys1378 each contribute to the Zn(2+) site. The segment at 1287 to 1317 (CPSCGTENIYDNVFEGSGLDMEPSLYRCSNV) adopts a CysA-type zinc-finger fold. The CysB motif motif lies at 1352–1378 (CEEPTCCSRLRRLPLHFSRNGPLCPVC).

Belongs to the DNA polymerase type-B family. In terms of assembly, component of the alpha DNA polymerase complex (also known as the alpha DNA polymerase-primase complex) consisting of four subunits: the catalytic subunit POLA1, the regulatory subunit POLA2, and the primase complex subunits PRIM1 and PRIM2 respectively. Within the complex, POLA1 directly interacts with PRIM2. Interacts with PARP1; this interaction functions as part of the control of replication fork progression. Interacts with MCM10 and WDHD1; these interactions recruit the polymerase alpha complex to the pre-replicative complex bound to DNA. Interacts with RPA1; this interaction stabilizes the replicative complex and reduces the misincorporation rate of DNA polymerase alpha by acting as a fidelity clamp. As to expression, expressed in those zones containing proliferating cells in the developing embryonic neocortex, as well as in the lateral and medial ganglionic eminences. After birth, expressed in cells that remain proliferating in the ventricular and subventricular zone of the striatum.

It localises to the nucleus. It is found in the cytoplasm. Its subcellular location is the cytosol. It catalyses the reaction DNA(n) + a 2'-deoxyribonucleoside 5'-triphosphate = DNA(n+1) + diphosphate. Its function is as follows. Catalytic subunit of the DNA polymerase alpha complex (also known as the alpha DNA polymerase-primase complex) which plays an essential role in the initiation of DNA synthesis. During the S phase of the cell cycle, the DNA polymerase alpha complex (composed of a catalytic subunit POLA1, a regulatory subunit POLA2 and two primase subunits PRIM1 and PRIM2) is recruited to DNA at the replicative forks via direct interactions with MCM10 and WDHD1. The primase subunit of the polymerase alpha complex initiates DNA synthesis by oligomerising short RNA primers on both leading and lagging strands. These primers are initially extended by the polymerase alpha catalytic subunit and subsequently transferred to polymerase delta and polymerase epsilon for processive synthesis on the lagging and leading strand, respectively. The reason this transfer occurs is because the polymerase alpha has limited processivity and lacks intrinsic 3' exonuclease activity for proofreading error, and therefore is not well suited for replicating long complexes. In the cytosol, responsible for a substantial proportion of the physiological concentration of cytosolic RNA:DNA hybrids, which are necessary to prevent spontaneous activation of type I interferon responses. In Mus musculus (Mouse), this protein is DNA polymerase alpha catalytic subunit (Pola1).